Reading from the N-terminus, the 261-residue chain is Global transcriptional regulator CodY (261 aa).

The segment at 1–159 (MANLLDKTRK…ASTVVGLQLL (159 aa)) is GAF domain. The segment at residues 207-226 (ASVIADRIGITRSVIVNALR) is a DNA-binding region (H-T-H motif).

The protein belongs to the CodY family.

It localises to the cytoplasm. Its function is as follows. DNA-binding global transcriptional regulator which is involved in the adaptive response to starvation and acts by directly or indirectly controlling the expression of numerous genes in response to nutrient availability. During rapid exponential growth, CodY is highly active and represses genes whose products allow adaptation to nutrient depletion. The protein is Global transcriptional regulator CodY of Streptococcus thermophilus (strain CNRZ 1066).